Here is a 63-residue protein sequence, read N- to C-terminus: DNA gyrase inhibitor YacG (63 aa).

Zn(2+) is bound by residues Cys10, Cys13, Cys29, and Cys33.

It belongs to the DNA gyrase inhibitor YacG family. As to quaternary structure, interacts with GyrB. Zn(2+) is required as a cofactor.

Its function is as follows. Inhibits all the catalytic activities of DNA gyrase by preventing its interaction with DNA. Acts by binding directly to the C-terminal domain of GyrB, which probably disrupts DNA binding by the gyrase. The polypeptide is DNA gyrase inhibitor YacG (Chromobacterium violaceum (strain ATCC 12472 / DSM 30191 / JCM 1249 / CCUG 213 / NBRC 12614 / NCIMB 9131 / NCTC 9757 / MK)).